The chain runs to 391 residues: L-tryptophan--pyruvate aminotransferase 1 (391 aa).

Pyridoxal 5'-phosphate-binding positions include Tyr58, 100–101 (ST), Asn168, 191–194 (DFAY), 214–217 (TFSK), and Arg225. Lys217 is modified (N6-(pyridoxal phosphate)lysine).

It belongs to the alliinase family. The cofactor is pyridoxal 5'-phosphate. As to expression, expressed at the leaf margin and in the vasculature of emerging young leaves. Expressed in the quiescent center and in the vasculature of root tips. Detected in the shoot apical meristem, stems, sepals, stamen filaments, the shoot and root junction, the stigma and the base of the silique.

The protein resides in the cytoplasm. The enzyme catalyses L-tryptophan + 2-oxoglutarate = indole-3-pyruvate + L-glutamate. The catalysed reaction is L-tryptophan + pyruvate = indole-3-pyruvate + L-alanine. The protein operates within plant hormone metabolism; auxin biosynthesis. Inhibited by L-kynurenine. L-tryptophan aminotransferase involved in auxin (IAA) biosynthesis. Can convert L-tryptophan and pyruvate to indole-3-pyruvic acid (IPA) and alanine. Catalyzes the first step in IPA branch of the auxin biosynthetic pathway. Required for auxin production to initiate multiple change in growth in response to environmental and developmental cues. It is also active with phenylalanine, tyrosine, leucine, alanine, methionine and glutamine. Both TAA1 and TAR2 are required for maintaining proper auxin levels in roots, while TAA1, TAR1 and TAR2 are required for proper embryo patterning. Involved in the maintenance of the root stem cell niches and required for shade avoidance. The polypeptide is L-tryptophan--pyruvate aminotransferase 1 (TAA1) (Arabidopsis thaliana (Mouse-ear cress)).